The chain runs to 1530 residues: MLKGSSSTSFLLPQQFVEPLPHAPVEISALHYGLLSRNDVHRLSVLPCRRVVGDVKEYGVNDARLGVCDRLSICETCGLNSIECVGHPGHIDLEAPVFHLGFFTTVLRICRTICKRCSHVLLDDTEIDYYKRRLSSSSLEPLQRTMLIKTIQTDAYKTRVCLKCGGLNGVVRRVRPMRLVHEKYHVEPRRGEGPRENPGGFFDAELRTACAYNKVVGECREFVHDFLDPVRVRQLFLAVPPGEVILLGLAPGVSPTDLLMTTLLVPPVPVRPRGCAGTTTVRDDDLTAQYNDILVSTDTMQDGSLDATRYTETWEMLQMRAARLLDSSLPGFPPNVRTSDLKSYAQRLKSKHGRFRCNLSGKRVDYSGRSVISPDPNLDVDELAVPLHVARVLTYPQRVFKANHELMRRLVRNGPHVHPGATTVYLAQEGSKKSLKNERDRHRLAARLAVGDIVERHVMNGDLVLFNRQPSLHRVSMMAHRARVLPFRTFRFNECCCAPYNADFDGDEMNVHFVQTEKARAEALQLMSTARNIISAKNGEPIIACTQDFLAAAYLVTSRDVFFDRGEFSQMVSHWLGPVTQFRLPIPAILKPVELWTGKQLFELIVRPSPEVDVLLSFEAPTKFYTRKGKHDCAEEGYVAFLDSCFISGRLDKKLLGGGAKDGLFARLHTIAGGGYTARVMSRIAQFTSRYLTNYGFSLGLGDVAPTPELNKQKAAVLARSVEVCDGLIKSAKTGRMIPLPGLTVKQSLEARLNTELSKVRDECGTAAVQTLSIHNNTPLIMVQSGSKGSALNIAQMMACVGQQTVSGKRILDAFQDRSLPHFHRFEEAPAARGFVANSFYSGLSPTEFFFHTMAGREGLVDTAVKTAETGYIYRRLMKAMENLSVRYDGTVRNTKGDVIQLRFGEDGLDPQLMEGNSGTPLNLEQEWLSVRAAYARWVVGLLAGSKTASDGNAIRDNENYFNEFISMLPTEGPSFVEACLNGDQEALKVCEEQESREDALHNSNGKTNDRESRPRTGRLRRAVLISHLVKVCSRKFKDDIQDFFVKKVREQQRIRNLLNLPNTSRERTEGGGDNSGPIANKRTKKRAPSLKVKDSKEGGRVSELRDLEMLQTELLPLTRGMVTRFIAQCASKYLRKACEPGTPCGAIAAQSVGEPSTQMTLRTFHFAGVASMSITQGVPRLVEVINANRNIATPVVTAPVLLMEGEENHCEIFRKRARFVKAQIERVLLREVVSEIVEVCSDTEFYLRVHLNMSVITKLHLPINAITVRQRILAAAGHTMSPLRMLNEDCIEVFSLDTLAVYPHFQDARWVHFSLRRILGLLPDVVVGGIGGINRAMISSNGTEVLAEGAELRAVMNLWGVDSTRVVCNHVAVVERVLGIEAARRVIVDEIQNILKAYSLSIDVRHVYLLADLMTQRGVVLGITRYGIQKMNFNVLTMASFERTTDHLYNAAATQRVDRDLSVSDSIIVGKPVPLGTTSFDLLLDGSISNDILPPQRCVKRGMGPNFHTAKRHHLVPLAAEGVFRLDLF.

Zn(2+)-binding residues include Cys74, Cys77, Cys84, His87, Cys114, Cys117, and Cys161. Mg(2+) is bound by residues Asp503, Asp505, and Asp507. Residues 846–858 (PTEFFFHTMAGRE) form a bridging helix region. Positions 992 to 1001 (EEQESREDAL) are enriched in basic and acidic residues. 2 disordered regions span residues 992–1016 (EEQE…SRPR) and 1057–1099 (NLLN…SKEG).

Belongs to the RNA polymerase beta' chain family. In terms of assembly, component of the RNA polymerase III (Pol III) complex consisting of 17 subunits.

It is found in the nucleus. It catalyses the reaction RNA(n) + a ribonucleoside 5'-triphosphate = RNA(n+1) + diphosphate. Functionally, DNA-dependent RNA polymerase catalyzes the transcription of DNA into RNA using the four ribonucleoside triphosphates as substrates. Largest and catalytic core component of RNA polymerase III which synthesizes small RNAs, such as 5S rRNA and tRNAs. Forms the polymerase active center together with the second largest subunit. A single-stranded DNA template strand of the promoter is positioned within the central active site cleft of Pol III. A bridging helix emanates from RPC1 and crosses the cleft near the catalytic site and is thought to promote translocation of Pol III by acting as a ratchet that moves the RNA-DNA hybrid through the active site by switching from straight to bent conformations at each step of nucleotide addition. This is DNA-directed RNA polymerase III subunit RPC1 from Trypanosoma brucei brucei.